The following is a 560-amino-acid chain: MRSDRIKKGFERAPHRSLLRATGLNDGDFEKPFIGIANSHIDIIPGHYYLQEYGRIAKDEIRKAGGVPFEFNTIGVDDGIAMGHEGMKYSLPSRELIADSIETVMNAHQLDALVCIPNCDKIVPGMLMGALRVNVPTVFVSGGPMKAGHLHDGTPIDLNTAFEAVGKRAQGQLTDAELYEIECQACPSGGSCSGMFTANSMNVLCEAMGVALPGNGTVLALTPEREALVRRAARRAVEIAADERFKLRNIANRDAIHNAMVVDMAMGGSSNTVLHMLAISREAGAPLSLRDIEEIAGKVAHIAKIAPSLATVHMEDIHRAGGVPAVLREAARRGGSVREGALTVTGETVGERIRDARTADPELIRPLENAYSPVGGLAVLFGNLAAEGAVVKTAGIQPSMRRFTGAAICFDSQDEAIAGIMGGKVKPGHFVVIRYEGPKGGPGMQEMLSPTSLIMGMGLGESVALVTDGRFSGATRGACVGHVSPEAAEGGVIGLVQDGDRITIDVEARALTVDVPDAELARRREGFRPKRRDPGSSWLRRYAHLVTNAANGAVLRSTDL.

A Mg(2+)-binding site is contributed by aspartate 78. [2Fe-2S] cluster is bound at residue cysteine 119. Residues aspartate 120 and lysine 121 each coordinate Mg(2+). Lysine 121 carries the N6-carboxylysine modification. Residue cysteine 192 participates in [2Fe-2S] cluster binding. A Mg(2+)-binding site is contributed by glutamate 446. Serine 472 (proton acceptor) is an active-site residue.

Belongs to the IlvD/Edd family. In terms of assembly, homodimer. [2Fe-2S] cluster is required as a cofactor. Requires Mg(2+) as cofactor.

The catalysed reaction is (2R)-2,3-dihydroxy-3-methylbutanoate = 3-methyl-2-oxobutanoate + H2O. It carries out the reaction (2R,3R)-2,3-dihydroxy-3-methylpentanoate = (S)-3-methyl-2-oxopentanoate + H2O. Its pathway is amino-acid biosynthesis; L-isoleucine biosynthesis; L-isoleucine from 2-oxobutanoate: step 3/4. The protein operates within amino-acid biosynthesis; L-valine biosynthesis; L-valine from pyruvate: step 3/4. Functions in the biosynthesis of branched-chain amino acids. Catalyzes the dehydration of (2R,3R)-2,3-dihydroxy-3-methylpentanoate (2,3-dihydroxy-3-methylvalerate) into 2-oxo-3-methylpentanoate (2-oxo-3-methylvalerate) and of (2R)-2,3-dihydroxy-3-methylbutanoate (2,3-dihydroxyisovalerate) into 2-oxo-3-methylbutanoate (2-oxoisovalerate), the penultimate precursor to L-isoleucine and L-valine, respectively. The chain is Dihydroxy-acid dehydratase from Anaeromyxobacter sp. (strain K).